The sequence spans 371 residues: MSKQSPTRKLRQTVYDASLKVMFTLRPERIHGIMNKALGVVDGVAPLNRTMEKIIAVHDDSLSQEVFGVTFPRPLGLAAGFDKNASMADAWGAVGFGYAELGTVTASPQPGNPTPRLFRLPADKAILNRMGFNNLGAAEVAKNLRNRKSTDVIGINIGKTKVVPAEHAVDDYRRSASLLGDLADYLVVNVSSPNTPGLRDLQAVESLRPILAAVQESTTVPVLVKIAPDLSDEDIDAVADLAVELKLAGIVATNTTISREGLNTPSGEVEAMGAGGISGAPVAARSLEVLKRLYARVGKEMVLISVGGISTPEQAWERITSGATLLQGYTPFIYGGPDWIRDIHLGIAKQLKAHGLRNIADAVGSELEWKN.

Residues 79–83 (AGFDK) and T103 each bind FMN. K83 is a substrate binding site. Position 128-132 (128-132 (NRMGF)) interacts with substrate. Positions 156 and 189 each coordinate FMN. Residue N189 coordinates substrate. S192 acts as the Nucleophile in catalysis. N194 is a substrate binding site. FMN-binding residues include K225 and T253. 254–255 (NT) serves as a coordination point for substrate. Residues G279, G308, and 329 to 330 (YT) each bind FMN.

The protein belongs to the dihydroorotate dehydrogenase family. Type 2 subfamily. Monomer. It depends on FMN as a cofactor.

The protein resides in the cell membrane. It carries out the reaction (S)-dihydroorotate + a quinone = orotate + a quinol. Its pathway is pyrimidine metabolism; UMP biosynthesis via de novo pathway; orotate from (S)-dihydroorotate (quinone route): step 1/1. In terms of biological role, catalyzes the conversion of dihydroorotate to orotate with quinone as electron acceptor. This is Dihydroorotate dehydrogenase (quinone) from Corynebacterium glutamicum (strain ATCC 13032 / DSM 20300 / JCM 1318 / BCRC 11384 / CCUG 27702 / LMG 3730 / NBRC 12168 / NCIMB 10025 / NRRL B-2784 / 534).